We begin with the raw amino-acid sequence, 615 residues long: UvrABC system protein C (615 aa).

The 80-residue stretch at 12–91 (EKPGVYIMKD…IKKYKPKYNV (80 aa)) folds into the GIY-YIG domain. The UVR domain occupies 203–238 (DWLIQKLKEDMKKAAEELRFEEAARIRDQIFAIERT).

The protein belongs to the UvrC family. Interacts with UvrB in an incision complex.

The protein localises to the cytoplasm. Its function is as follows. The UvrABC repair system catalyzes the recognition and processing of DNA lesions. UvrC both incises the 5' and 3' sides of the lesion. The N-terminal half is responsible for the 3' incision and the C-terminal half is responsible for the 5' incision. The protein is UvrABC system protein C of Thermoanaerobacter pseudethanolicus (strain ATCC 33223 / 39E) (Clostridium thermohydrosulfuricum).